The chain runs to 82 residues: MAKIKSLDVITVAIILLLVIADQATAITVQADCIGPCNDDCQQLCKSKGYTDWTCASFRTKSSCCCKPPRHQIFEQNAQLNN.

The first 26 residues, 1–26, serve as a signal peptide directing secretion; sequence MAKIKSLDVITVAIILLLVIADQATA. 4 cysteine pairs are disulfide-bonded: Cys-33–Cys-66, Cys-37–Cys-55, Cys-41–Cys-64, and Cys-45–Cys-65.

This sequence belongs to the DEFL family.

It localises to the secreted. The protein is Defensin-like protein 75 (LCR45) of Arabidopsis thaliana (Mouse-ear cress).